The primary structure comprises 736 residues: Phosphoribosylformylglycinamidine synthase subunit PurL (736 aa).

His-50 is an active-site residue. ATP contacts are provided by Tyr-53 and Lys-92. Glu-94 contacts Mg(2+). Substrate contacts are provided by residues 95–98 (SHNH) and Arg-117. Residue His-96 is the Proton acceptor of the active site. Mg(2+) is bound at residue Asp-118. Gln-241 contributes to the substrate binding site. Asp-269 provides a ligand contact to Mg(2+). A substrate-binding site is contributed by 313–315 (ESQ). 2 residues coordinate ATP: Asp-495 and Gly-532. Residue Asn-533 coordinates Mg(2+). Residue Ser-535 coordinates substrate.

Belongs to the FGAMS family. In terms of assembly, monomer. Part of the FGAM synthase complex composed of 1 PurL, 1 PurQ and 2 PurS subunits.

It localises to the cytoplasm. It catalyses the reaction N(2)-formyl-N(1)-(5-phospho-beta-D-ribosyl)glycinamide + L-glutamine + ATP + H2O = 2-formamido-N(1)-(5-O-phospho-beta-D-ribosyl)acetamidine + L-glutamate + ADP + phosphate + H(+). Its pathway is purine metabolism; IMP biosynthesis via de novo pathway; 5-amino-1-(5-phospho-D-ribosyl)imidazole from N(2)-formyl-N(1)-(5-phospho-D-ribosyl)glycinamide: step 1/2. Its function is as follows. Part of the phosphoribosylformylglycinamidine synthase complex involved in the purines biosynthetic pathway. Catalyzes the ATP-dependent conversion of formylglycinamide ribonucleotide (FGAR) and glutamine to yield formylglycinamidine ribonucleotide (FGAM) and glutamate. The FGAM synthase complex is composed of three subunits. PurQ produces an ammonia molecule by converting glutamine to glutamate. PurL transfers the ammonia molecule to FGAR to form FGAM in an ATP-dependent manner. PurS interacts with PurQ and PurL and is thought to assist in the transfer of the ammonia molecule from PurQ to PurL. The sequence is that of Phosphoribosylformylglycinamidine synthase subunit PurL from Bartonella quintana (strain Toulouse) (Rochalimaea quintana).